Consider the following 86-residue polypeptide: Small ribosomal subunit protein eS27y (86 aa).

The segment at 39–61 adopts a C4-type zinc-finger fold; it reads CQGCFNITTVFSHSQTVVVCGNC.

Belongs to the eukaryotic ribosomal protein eS27 family. Requires Zn(2+) as cofactor.

In terms of biological role, may be involved in the elimination of damaged mRNA after UV irradiation. In Arabidopsis thaliana (Mouse-ear cress), this protein is Small ribosomal subunit protein eS27y (RPS27B).